A 323-amino-acid chain; its full sequence is NADH-ubiquinone oxidoreductase chain 1 (323 aa).

Transmembrane regions (helical) follow at residues 8 to 28 (VINP…LTLL), 74 to 94 (FLFL…WAPM), 105 to 125 (LGVL…LGSG), 145 to 165 (ISYE…TGGF), 176 to 196 (SIWL…STLA), 236 to 256 (ILLM…IPAF), 258 to 278 (ELTA…FLWV), and 298 to 318 (FLPL…ALAG).

It belongs to the complex I subunit 1 family.

It is found in the mitochondrion inner membrane. The enzyme catalyses a ubiquinone + NADH + 5 H(+)(in) = a ubiquinol + NAD(+) + 4 H(+)(out). Functionally, core subunit of the mitochondrial membrane respiratory chain NADH dehydrogenase (Complex I) that is believed to belong to the minimal assembly required for catalysis. Complex I functions in the transfer of electrons from NADH to the respiratory chain. The immediate electron acceptor for the enzyme is believed to be ubiquinone. The chain is NADH-ubiquinone oxidoreductase chain 1 (MT-ND1) from Oncorhynchus mykiss (Rainbow trout).